The chain runs to 384 residues: Substance-K receptor (384 aa).

The Extracellular portion of the chain corresponds to methionine 1–glutamine 32. Residues asparagine 11, asparagine 18, and asparagine 19 are each glycosylated (N-linked (GlcNAc...) asparagine). A helical membrane pass occupies residues leucine 33 to tryptophan 56. Over isoleucine 57 to asparagine 69 the chain is Cytoplasmic. The helical transmembrane segment at tyrosine 70–asparagine 90 threads the bilayer. Over phenylalanine 91–histidine 107 the chain is Extracellular. Cysteine 106 and cysteine 181 form a disulfide bridge. Residues phenylalanine 108 to alanine 129 form a helical membrane-spanning segment. Residues aspartate 130–arginine 149 lie on the Cytoplasmic side of the membrane. A helical transmembrane segment spans residues alanine 150 to serine 170. Residues threonine 171–leucine 196 are Extracellular-facing. The chain crosses the membrane as a helical span at residues tyrosine 197–serine 218. At valine 219 to threonine 251 the chain is on the cytoplasmic side. Residues methionine 252–leucine 272 form a helical membrane-spanning segment. Residues glycine 273 to leucine 290 are Extracellular-facing. A helical membrane pass occupies residues alanine 291–leucine 310. At asparagine 311–proline 384 the chain is on the cytoplasmic side. The S-palmitoyl cysteine moiety is linked to residue cysteine 324.

This sequence belongs to the G-protein coupled receptor 1 family.

The protein localises to the cell membrane. In terms of biological role, this is a receptor for the tachykinin neuropeptide substance K (neurokinin A). It is associated with G proteins that activate a phosphatidylinositol-calcium second messenger system. In Canis lupus familiaris (Dog), this protein is Substance-K receptor (TACR2).